We begin with the raw amino-acid sequence, 549 residues long: Chaperonin GroEL 1 (549 aa).

ATP is bound by residues 30–33 (TLGP), Lys51, 87–91 (DGTTT), Gly415, 479–481 (NAA), and Asp495.

Belongs to the chaperonin (HSP60) family. In terms of assembly, forms a cylinder of 14 subunits composed of two heptameric rings stacked back-to-back. Interacts with the co-chaperonin GroES.

Its subcellular location is the cytoplasm. The catalysed reaction is ATP + H2O + a folded polypeptide = ADP + phosphate + an unfolded polypeptide.. Its function is as follows. Together with its co-chaperonin GroES, plays an essential role in assisting protein folding. The GroEL-GroES system forms a nano-cage that allows encapsulation of the non-native substrate proteins and provides a physical environment optimized to promote and accelerate protein folding. The chain is Chaperonin GroEL 1 from Azoarcus sp. (strain BH72).